The sequence spans 445 residues: 3-phosphoshikimate 1-carboxyvinyltransferase (445 aa).

The segment at 1–25 (MTDSNQPMPLQARKSGALHGTARVP) is disordered. Lys28, Ser29, and Arg33 together coordinate 3-phosphoshikimate. Residue Lys28 participates in phosphoenolpyruvate binding. 2 residues coordinate phosphoenolpyruvate: Gly101 and Arg129. Residues Ser175, Gln177, Asp328, and Lys355 each contribute to the 3-phosphoshikimate site. Gln177 contributes to the phosphoenolpyruvate binding site. Catalysis depends on Asp328, which acts as the Proton acceptor. Arg359 and Arg402 together coordinate phosphoenolpyruvate.

It belongs to the EPSP synthase family. Monomer.

The protein localises to the cytoplasm. The catalysed reaction is 3-phosphoshikimate + phosphoenolpyruvate = 5-O-(1-carboxyvinyl)-3-phosphoshikimate + phosphate. It participates in metabolic intermediate biosynthesis; chorismate biosynthesis; chorismate from D-erythrose 4-phosphate and phosphoenolpyruvate: step 6/7. Functionally, catalyzes the transfer of the enolpyruvyl moiety of phosphoenolpyruvate (PEP) to the 5-hydroxyl of shikimate-3-phosphate (S3P) to produce enolpyruvyl shikimate-3-phosphate and inorganic phosphate. In Rhodopseudomonas palustris (strain ATCC BAA-98 / CGA009), this protein is 3-phosphoshikimate 1-carboxyvinyltransferase.